The primary structure comprises 1574 residues: Multiple epidermal growth factor-like domains protein 6 (1574 aa).

A signal peptide spans 1–27; sequence MPVRAEARAAWRVVALALLLLPAMPAA. Residues 40 to 122 enclose the EMI domain; sequence MPHVCAEQKL…QKPGQEGCLS (83 aa). 99 disulfide bridges follow: Cys-44–Cys-108, Cys-74–Cys-80, Cys-107–Cys-120, Cys-127–Cys-138, Cys-134–Cys-147, Cys-149–Cys-162, Cys-168–Cys-179, Cys-175–Cys-188, Cys-190–Cys-203, Cys-209–Cys-220, Cys-216–Cys-230, Cys-232–Cys-245, Cys-251–Cys-262, Cys-258–Cys-271, Cys-273–Cys-286, Cys-292–Cys-303, Cys-299–Cys-312, Cys-314–Cys-327, Cys-338–Cys-349, Cys-345–Cys-358, Cys-360–Cys-373, Cys-379–Cys-389, Cys-385–Cys-398, Cys-400–Cys-411, Cys-419–Cys-430, Cys-426–Cys-439, Cys-441–Cys-454, Cys-524–Cys-537, Cys-531–Cys-544, Cys-546–Cys-555, Cys-568–Cys-580, Cys-574–Cys-587, Cys-589–Cys-598, Cys-611–Cys-623, Cys-617–Cys-630, Cys-632–Cys-641, Cys-654–Cys-668, Cys-660–Cys-675, Cys-677–Cys-686, Cys-699–Cys-711, Cys-705–Cys-718, Cys-722–Cys-731, Cys-744–Cys-755, Cys-750–Cys-762, Cys-764–Cys-773, Cys-786–Cys-799, Cys-793–Cys-806, Cys-808–Cys-817, Cys-830–Cys-842, Cys-836–Cys-849, Cys-851–Cys-860, Cys-873–Cys-886, Cys-879–Cys-893, Cys-895–Cys-904, Cys-917–Cys-929, Cys-923–Cys-936, Cys-938–Cys-947, Cys-960–Cys-972, Cys-966–Cys-979, Cys-981–Cys-990, Cys-1003–Cys-1015, Cys-1009–Cys-1022, Cys-1024–Cys-1033, Cys-1046–Cys-1058, Cys-1052–Cys-1065, Cys-1067–Cys-1076, Cys-1089–Cys-1101, Cys-1095–Cys-1108, Cys-1110–Cys-1119, Cys-1132–Cys-1144, Cys-1138–Cys-1151, Cys-1153–Cys-1162, Cys-1175–Cys-1187, Cys-1181–Cys-1194, Cys-1196–Cys-1205, Cys-1218–Cys-1231, Cys-1224–Cys-1238, Cys-1240–Cys-1249, Cys-1262–Cys-1274, Cys-1268–Cys-1281, Cys-1283–Cys-1292, Cys-1305–Cys-1317, Cys-1311–Cys-1324, Cys-1326–Cys-1335, Cys-1348–Cys-1360, Cys-1354–Cys-1367, Cys-1369–Cys-1378, Cys-1391–Cys-1403, Cys-1397–Cys-1410, Cys-1412–Cys-1421, Cys-1434–Cys-1446, Cys-1440–Cys-1453, Cys-1455–Cys-1464, Cys-1477–Cys-1489, Cys-1483–Cys-1496, Cys-1498–Cys-1507, Cys-1520–Cys-1532, Cys-1526–Cys-1539, and Cys-1541–Cys-1550. An EGF-like 1; calcium-binding domain is found at 123 to 163; the sequence is DVDECASANGGCEGPCCNTVGGFYCRCPPGYQLQGDGKTCQ. Residues 164-204 enclose the EGF-like 2; calcium-binding domain; sequence DVDECRAHNGGCQHRCVNTPGSYLCECKPGFRLHTDGRTCL. EGF-like domains lie at 205 to 246 and 247 to 287; these read AISS…RRCV and RRSP…KTCE. The EGF-like 5; calcium-binding domain occupies 288–328; that stretch reads DVDECALGLAQCAHGCLNTQGSFKCVCHAGYELGADGRQCY. 2 EGF-like domains span residues 334–374 and 375–412; these read IVNS…KTCI and DIDDCANSPCCQQACANTPGGYECSCFAGYRLNTDGCG. Positions 415 to 455 constitute an EGF-like 8; calcium-binding domain; sequence DVDECASGHGGCEHHCSNLAGSFQCFCEAGYRLDEDRRGCT. 24 EGF-like domains span residues 520-556, 564-599, 607-642, 650-687, 695-732, 740-774, 782-818, 826-861, 869-905, 913-948, 956-991, 999-1034, 1042-1077, 1085-1120, 1128-1163, 1171-1206, 1214-1250, 1258-1293, 1301-1336, 1344-1379, 1387-1422, 1430-1465, 1473-1508, and 1516-1551; these read FGHDCSLTCDDCRNGGTCFPGQDGCDCPEGWTGIICN, FGKNCSSPCTCQNGGTCDPVLGACRCPPGVSGAHCE, YGKHCRKKCHCANRGRCHRLYGACLCDPGLYGRFCH, FGPGCSEDCLCEQSHTRSCNPKDGSCSCKAGFQGERCQ, FGPGCRHRCTCQPGVACDPVSGECRTQCPPGYQGEDCG, FGVNCSGSCSCVGAPCHRVTGECLCPPGKTGEDCG, WGLGCQEICPACEHGASCNPETGTCLCLPGFVGSRCQ, YGTGCQIRCACANDGHCDPTTGRCSCAPGWTGLSCQ, WGPDCIHPCNCSAGHGNCDAVSGLCLCEAGYEGPRCE, YGPSCEQKCRCEHGAACDHVSGACTCPAGWRGSFCE, FGLDCDSACNCSAGAPCDAVTGSCICPAGRWGPRCA, FGLNCSQICTCFNGASCDSVTGQCHCAPGWMGPTCL, YGKNCQHSCLCRNGGRCDPILGQCTCPEGWTGLACE, YAAGCQLNCSCLHGGICDRLTGHCLCPAGWTGDKCQ, FGVHCEEHCACRKGASCHHVTGACFCPPGWRGPHCE, FGEACAQRCLCPTNASCHHVTGECRCPPGFTGLSCE, FGKDCEHLCQCPGETWACDPASGVCTCAAGYHGTGCL, YGPGCEHICKCLNGGTCDPATGACYCPAGFLGADCS, FGPSCAHVCACRQGAACDPVSGACICSPGKTGVRCE, FGKGCELKCACRNGGLCHATNGSCSCPLGWMGPHCE, YGAACLLECFCQNNGSCEPTTGACLCGPGFYGQACE, HGPGCQRVCECQQGAPCDPVSGQCLCPAGFHGQFCE, FGDGCLQQCNCHTGVPCDPISGLCLCPPGRTGAACD, and FGPGCALRCDCGGGADCDPISGQCHCVDSYMGPTCR. Positions 1555–1568 are enriched in polar residues; that stretch reads TQISSSRPAPQHPS. Residues 1555 to 1574 form a disordered region; that stretch reads TQISSSRPAPQHPSSRAMKH.

In terms of tissue distribution, expressed in lung.

The protein localises to the secreted. This is Multiple epidermal growth factor-like domains protein 6 (Megf6) from Rattus norvegicus (Rat).